Reading from the N-terminus, the 523-residue chain is Synaptotagmin-10 (523 aa).

Topologically, residues 1–55 (MSFHKEDGVNSLCQKALHIVTELCFAGQVEWEKCSGIFPRDRGSQGGSSTDISVS) are vesicular. The segment at 13-35 (CQKALHIVTELCFAGQVEWEKCS) is cysteine motif. Residues 56–76 (LLAVVVSFCGLALLVVSLFVF) form a helical membrane-spanning segment. Residues 77–523 (WKLCWPCWKS…CPSPKPPSTP (447 aa)) are Cytoplasmic-facing. Thr-136 carries the phosphothreonine modification. C2 domains lie at 231-352 (ICGK…TVWK) and 363-496 (DLGE…THWH). Ca(2+) is bound by residues Asp-262, Asp-268, Asp-320, Phe-321, Asp-322, Ser-325, Asp-328, Asp-394, Asp-400, Asp-454, and Asp-456.

This sequence belongs to the synaptotagmin family. Homodimer; disulfide-linked via the cysteine motif. Can also form heterodimers with SYT3, SYT6, SYT7 and SYT9. It depends on Ca(2+) as a cofactor. In terms of tissue distribution, expressed only in pancreas, lung and kidney.

Its subcellular location is the cytoplasmic vesicle. It localises to the secretory vesicle membrane. Functionally, ca(2+) sensor specifically required for the Ca(2+)-dependent exocytosis of secretory vesicles containing IGF1 in neurons of the olfactory bulb. Exocytosis of IGF1 is required for sensory perception of smell. Not involved in Ca(2+)-dependent synaptic vesicle exocytosis. Acts through Ca(2+) and phospholipid binding to the C2 domain: Ca(2+) induces binding of the C2-domains to phospholipid membranes and to assembled SNARE-complexes; both actions contribute to triggering exocytosis. The chain is Synaptotagmin-10 (SYT10) from Homo sapiens (Human).